The sequence spans 579 residues: V-type ATP synthase alpha chain (579 aa).

227-234 (GGFGTGKT) serves as a coordination point for ATP.

The protein belongs to the ATPase alpha/beta chains family.

It carries out the reaction ATP + H2O + 4 H(+)(in) = ADP + phosphate + 5 H(+)(out). Its function is as follows. Produces ATP from ADP in the presence of a proton gradient across the membrane. The V-type alpha chain is a catalytic subunit. The sequence is that of V-type ATP synthase alpha chain from Anaeromyxobacter dehalogenans (strain 2CP-C).